The sequence spans 260 residues: Serine hydroxymethyltransferase (260 aa).

Position 60 is an N6-(pyridoxal phosphate)lysine (K60).

It belongs to the SHMT family. In terms of assembly, homodimer. Requires pyridoxal 5'-phosphate as cofactor.

It localises to the cytoplasm. The catalysed reaction is (6R)-5,10-methylene-5,6,7,8-tetrahydrofolate + glycine + H2O = (6S)-5,6,7,8-tetrahydrofolate + L-serine. The protein operates within one-carbon metabolism; tetrahydrofolate interconversion. It functions in the pathway amino-acid biosynthesis; glycine biosynthesis; glycine from L-serine: step 1/1. Functionally, catalyzes the reversible interconversion of serine and glycine with tetrahydrofolate (THF) serving as the one-carbon carrier. This reaction serves as the major source of one-carbon groups required for the biosynthesis of purines, thymidylate, methionine, and other important biomolecules. Also exhibits THF-independent aldolase activity toward beta-hydroxyamino acids, producing glycine and aldehydes, via a retro-aldol mechanism. This Corynebacterium sp. (strain P-1) protein is Serine hydroxymethyltransferase.